The sequence spans 1032 residues: Toll-like receptor 9 (1032 aa).

A signal peptide spans 1–25; the sequence is MVLRRRTLHPLSLLVQAAVLAETLA. The Extracellular portion of the chain corresponds to 26–818; it reads LGTLPAFLPC…LCLDEVLSWD (793 aa). Cysteine 35 and cysteine 45 are oxidised to a cystine. 47-51 lines the DNA pocket; the sequence is WLFLK. 26 LRR repeats span residues 62–85, 87–110, 122–147, 150–166, 167–190, 198–221, 223–242, 243–268, 283–306, 308–332, 333–356, 363–386, 390–413, 415–440, 471–495, 497–520, 521–544, 546–573, 575–599, 601–623, 628–651, 653–676, 677–700, 702–724, 725–748, and 750–773; these read CSNITRLSLISNRIHHLHNSDFVH, SNLRQLNLKWNCPPTGLSPLHFSC, MRTLEELNLSYNGITTVPRLPSSLVN, LSHTNILVLDANSLAGL, YSLRVLFMDGNCYYKNPCTGAVKV, LSNLTHLSLKYNNLTKVPRQLPPS, EYLLVSYNLIVKLGPEDLAN, LTSLRVLDVGGNCRRCDHAPNPCIEC, LSHLEGLVLKDSSLHTLNSSWFQG, VNLSVLDLSENFLYESITHTNAFQN, LTRLRKLNLSFNYRKKVSFARLHL, LVSLQELNMNGIFFRLLNKYTLRW, LPKLHTLHLQMNFINQAQLSIFGT, RALRFVDLSDNRISGPSTLSEATPEE, CKNFKFTMDLSRNNLVTIKPEMFVN, SRLQCLSLSHNSIAQAVNGSQFLP, LTNLQVLDLSHNKLDLYHWKSFSE, PQLQALDLSYNSQPFSMKGIGHNFSFVT, LSMLQSLSLAHNDIHTRVSSHLNSN, VRFLDFSGNGMGRMWDEGGLYLH, LSGLLKLDLSQNNLHILRPQNLDN, PKSLKLLSLRDNYLSFFNWTSLSF, LPNLEVLDLAGNQLKALTNGTLPN, TLLQKLDVSSNSIVSVVPAFFAL, AVELKEVNLSHNILKTVDRSWFGP, and VMNLTVLDVRSNPLHCACGAAFVD. Residue asparagine 64 is glycosylated (N-linked (GlcNAc...) asparagine). Residues 72–77 and 95–109 each bind DNA; these read SNRIHH and KWNCPPTGLSPLHFS. A disulfide bridge connects residues cysteine 98 and cysteine 110. Residue asparagine 129 is glycosylated (N-linked (GlcNAc...) asparagine). Tyrosine 132 contacts DNA. Residue asparagine 147 is glycosylated (N-linked (GlcNAc...) asparagine). The cysteines at positions 178 and 184 are disulfide-linked. 179–181 is a binding site for DNA; that stretch reads YYK. N-linked (GlcNAc...) asparagine glycosylation is present at asparagine 200. DNA is bound at residue tyrosine 208. 2 N-linked (GlcNAc...) asparagine glycosylation sites follow: asparagine 210 and asparagine 242. Disulfide bonds link cysteine 255-cysteine 268 and cysteine 258-cysteine 265. S-palmitoyl cysteine attachment occurs at residues cysteine 258 and cysteine 265. Residues asparagine 300, asparagine 309, asparagine 332, and asparagine 340 are each glycosylated (N-linked (GlcNAc...) asparagine). The disordered stretch occupies residues 430–462; sequence PSTLSEATPEEADDAEQEELLSADPHPAPLSTP. Residues 437 to 450 show a composition bias toward acidic residues; it reads TPEEADDAEQEELL. Residues cysteine 471 and cysteine 501 are joined by a disulfide bond. Residues asparagine 495 and asparagine 514 are each glycosylated (N-linked (GlcNAc...) asparagine). Residue asparagine 568 is glycosylated (N-linked (GlcNAc...) asparagine). N-linked (GlcNAc...) asparagine glycosylation is found at asparagine 670, asparagine 695, and asparagine 700. N-linked (GlcNAc...) asparagine glycosylation is found at asparagine 732 and asparagine 752. Intrachain disulfides connect cysteine 765–cysteine 791 and cysteine 767–cysteine 810. Residues 819 to 839 form a helical membrane-spanning segment; sequence CFGLSLLAVAVGMVVPILHHL. Residues 840-1032 are Cytoplasmic-facing; the sequence is CGWDVWYCFH…QNFCRGPTAE (193 aa). Residues 868–1013 enclose the TIR domain; the sequence is LPYDAFVVFD…GFWAQLSTAL (146 aa).

This sequence belongs to the Toll-like receptor family. Monomer and homodimer. Exists as a monomer in the absence of unmethylated cytidine-phosphate-guanosine (CpG) ligand. Proteolytic processing of an insertion loop (Z-loop) is required for homodimerization upon binding to the unmethylated CpG ligand leading to its activation. Interacts with MYD88 via their respective TIR domains. Interacts with BTK. Interacts (via transmembrane domain) with UNC93B1. Interacts with CD300LH; the interaction may promote full activation of TLR9-triggered innate responses. Interacts with CNPY3 and HSP90B1; this interaction is required for proper folding in the endoplasmic reticulum. Interacts with SMPDL3B. Interacts with CD82; this interaction is essential for TLR9-dependent myddosome formation in response to CpG stimulation. Post-translationally, activated by proteolytic cleavage of the flexible loop between repeats LRR14 and LRR15 within the ectodomain. Cleavage requires UNC93B1. Proteolytically processed by first removing the majority of the ectodomain by either asparagine endopeptidase (AEP) or a cathepsin followed by a trimming event that is solely cathepsin mediated and required for optimal receptor signaling. Palmitoylated by ZDHHC3 in the Golgi regulates TLR9 trafficking from the Golgi to endosomes. Depalmitoylation by PPT1 controls the release of TLR9 from UNC93B1 in endosomes. Expressed in the basolateral region of gastric epithelial cells with high levels detected in antrum and body mucosa (at protein level). Detected in spleen and stomach at higher levels in C57BL/6 mice than BALB/C.

The protein localises to the endoplasmic reticulum membrane. It localises to the endosome. It is found in the lysosome. The protein resides in the cytoplasmic vesicle. Its subcellular location is the phagosome. Functionally, key component of innate and adaptive immunity. TLRs (Toll-like receptors) control host immune response against pathogens through recognition of molecular patterns specific to microorganisms. TLR9 is a nucleotide-sensing TLR which is activated by unmethylated cytidine-phosphate-guanosine (CpG) dinucleotides. Acts via MYD88 and TRAF6, leading to NF-kappa-B activation, cytokine secretion and the inflammatory response. Plays a role in defense against systemic mouse cytomegalovirus infection. Controls lymphocyte response to Helicobacter infection. Upon CpG stimulation, induces B-cell proliferation, activation, survival and antibody production. In Mus musculus (Mouse), this protein is Toll-like receptor 9 (Tlr9).